Consider the following 568-residue polypeptide: Potassium-transporting ATPase potassium-binding subunit (568 aa).

The next 12 helical transmembrane spans lie at 7–27 (LLIT…GNII), 67–87 (YALA…TLLV), 137–157 (GLTV…FALI), 180–200 (LYLL…QGVI), 258–278 (FIQI…FGQV), 288–308 (LLWA…YAEL), 332–352 (FGIL…CGAV), 361–381 (ALGG…FGGV), 384–404 (GLYG…LMIG), 421–441 (MVAL…ALTI), 488–508 (LLLA…VLAI), and 535–555 (LLIL…LILG).

Belongs to the KdpA family. As to quaternary structure, the system is composed of three essential subunits: KdpA, KdpB and KdpC.

The protein resides in the cell inner membrane. Functionally, part of the high-affinity ATP-driven potassium transport (or Kdp) system, which catalyzes the hydrolysis of ATP coupled with the electrogenic transport of potassium into the cytoplasm. This subunit binds the periplasmic potassium ions and delivers the ions to the membrane domain of KdpB through an intramembrane tunnel. The polypeptide is Potassium-transporting ATPase potassium-binding subunit (Photorhabdus laumondii subsp. laumondii (strain DSM 15139 / CIP 105565 / TT01) (Photorhabdus luminescens subsp. laumondii)).